Consider the following 293-residue polypeptide: Large ribosomal subunit protein uL2c (293 aa).

The segment at 224-245 (VMNPVDHPHGGGEGKSPIGRAR) is disordered.

Belongs to the universal ribosomal protein uL2 family. In terms of assembly, part of the 50S ribosomal subunit.

Its subcellular location is the plastid. It is found in the chloroplast. This chain is Large ribosomal subunit protein uL2c (rpl2), found in Pyropia yezoensis (Susabi-nori).